Reading from the N-terminus, the 483-residue chain is UDP-N-acetylmuramoyl-L-alanyl-D-glutamate--2,6-diaminopimelate ligase (483 aa).

S30 serves as a coordination point for UDP-N-acetyl-alpha-D-muramoyl-L-alanyl-D-glutamate. 109–115 contributes to the ATP binding site; that stretch reads GTNGKTT. UDP-N-acetyl-alpha-D-muramoyl-L-alanyl-D-glutamate contacts are provided by residues 151 to 152, S178, and R186; that span reads TT. Residue K218 is modified to N6-carboxylysine. Meso-2,6-diaminopimelate is bound by residues R380, 403 to 406, G453, and E457; that span reads DNPR. The Meso-diaminopimelate recognition motif signature appears at 403–406; that stretch reads DNPR.

Belongs to the MurCDEF family. MurE subfamily. Mg(2+) serves as cofactor. In terms of processing, carboxylation is probably crucial for Mg(2+) binding and, consequently, for the gamma-phosphate positioning of ATP.

Its subcellular location is the cytoplasm. The enzyme catalyses UDP-N-acetyl-alpha-D-muramoyl-L-alanyl-D-glutamate + meso-2,6-diaminopimelate + ATP = UDP-N-acetyl-alpha-D-muramoyl-L-alanyl-gamma-D-glutamyl-meso-2,6-diaminopimelate + ADP + phosphate + H(+). It functions in the pathway cell wall biogenesis; peptidoglycan biosynthesis. Functionally, catalyzes the addition of meso-diaminopimelic acid to the nucleotide precursor UDP-N-acetylmuramoyl-L-alanyl-D-glutamate (UMAG) in the biosynthesis of bacterial cell-wall peptidoglycan. This is UDP-N-acetylmuramoyl-L-alanyl-D-glutamate--2,6-diaminopimelate ligase from Chlamydia pneumoniae (Chlamydophila pneumoniae).